We begin with the raw amino-acid sequence, 466 residues long: UDP-glycosyltransferase 79 (466 aa).

The active-site Proton acceptor is His-27. His-27 provides a ligand contact to UDP-alpha-D-glucose. Asp-120 serves as the catalytic Charge relay. UDP-alpha-D-glucose is bound by residues Ser-142, Thr-291, Phe-343, Cys-344, His-361, Trp-364, Asn-365, Ser-366, Glu-369, Asp-385, and Gln-386. Thr-291, Phe-343, Cys-344, and His-361 together coordinate UDP. UDP contacts are provided by Asn-365, Ser-366, and Glu-369.

This sequence belongs to the UDP-glycosyltransferase family.

Its function is as follows. Involved in the detoxification of the Fusarium mycotoxin deoxynivalenol by the transfer of glucose from UDP-D-glucose to the hydroxyl group at C-3, forming deoxynivalenol-3-O-beta-D-glucoside. This Oryza sativa subsp. japonica (Rice) protein is UDP-glycosyltransferase 79.